A 307-amino-acid polypeptide reads, in one-letter code: MSGNESVVNYDHFIDKRRVRKAFERAAPLYDQAAVLQREVCDRMLSRLEYIKYMPDVVLDAGSGTGYGTCKLLERYPDASMLAIDIATGMHHQARQRMNSMIPRWRQLFGVGRNQRTSRVRYVAGDIEQLPLEDSCAGLVWSNLALQWCNDLKKTFDEMRRILKNGGLFMFSTFGPDTLKELRQAFRHADDYSHVNRFADMHDIGDMLVHSGFATPVMDMEYITLTYDEVISVMRDLKAIGAHNATGARHRGLTGKNAWQKAIGHYETLRTGGKLPATFEVVYGHAWKPAPRTSILTPETRRHIGLE.

Belongs to the methyltransferase superfamily.

It catalyses the reaction malonyl-[ACP] + S-adenosyl-L-methionine = malonyl-[ACP] methyl ester + S-adenosyl-L-homocysteine. It functions in the pathway cofactor biosynthesis; biotin biosynthesis. Functionally, converts the free carboxyl group of a malonyl-thioester to its methyl ester by transfer of a methyl group from S-adenosyl-L-methionine (SAM). It allows to synthesize pimeloyl-ACP via the fatty acid synthetic pathway. This Nitrosospira multiformis (strain ATCC 25196 / NCIMB 11849 / C 71) protein is Malonyl-[acyl-carrier protein] O-methyltransferase.